Consider the following 850-residue polypeptide: Bifunctional levopimaradiene synthase, chloroplastic (850 aa).

Residues 1–52 constitute a chloroplast transit peptide; that stretch reads MALPSSSLSSQIHTGATTQCIPHFHGSLNAGTSAGKRRSLYLRWGKGPSKIV. Residue lysine 250 coordinates substrate. Residues aspartate 383 and aspartate 385 each coordinate Mg(2+). Residues 383-386 carry the DXDD motif motif; sequence DIDD. A substrate-binding site is contributed by lysine 470. Mg(2+) is bound by residues aspartate 602, aspartate 606, asparagine 746, threonine 750, and glutamate 754. Positions 602-606 match the DDXXD motif motif; sequence DDLYD.

Belongs to the terpene synthase family. Tpsd subfamily. It depends on Mg(2+) as a cofactor. Expressed in young tissues such as flushing buds and green bark tissues. Lower levels in mature needles and bark.

It localises to the plastid. The protein localises to the chloroplast. It carries out the reaction (2E,6E,10E)-geranylgeranyl diphosphate = (+)-copalyl diphosphate. It catalyses the reaction (+)-copalyl diphosphate = abieta-8(14),12-diene + diphosphate. The catalysed reaction is (+)-copalyl diphosphate = neoabietadiene + diphosphate. The protein operates within terpene metabolism; oleoresin biosynthesis. In terms of biological role, involved in defensive oleoresin formation in conifers in response to insect attack or other injury. Involved in diterpene (C20) olefins biosynthesis. Bifunctional enzyme that catalyzes two sequential cyclizations of geranylgeranyl diphosphate (GGPP) to levopimaradiene. Levopimaradiene is the major products of the enzyme followed by abietadiene, neoabietadiene and palustradiene. No activity with geranyl diphosphate (GPP) or farnesyl diphosphate (FPP) as substrate. The polypeptide is Bifunctional levopimaradiene synthase, chloroplastic (LPS) (Pinus taeda (Loblolly pine)).